The following is a 219-amino-acid chain: Orotate phosphoribosyltransferase (219 aa).

K26 is a 5-phospho-alpha-D-ribose 1-diphosphate binding site. F34 to F35 contributes to the orotate binding site. 5-phospho-alpha-D-ribose 1-diphosphate contacts are provided by residues Y72–K73, R98, K99, K102, H104, and D124–A132. Positions 128 and 156 each coordinate orotate.

Belongs to the purine/pyrimidine phosphoribosyltransferase family. PyrE subfamily. Homodimer. It depends on Mg(2+) as a cofactor.

The enzyme catalyses orotidine 5'-phosphate + diphosphate = orotate + 5-phospho-alpha-D-ribose 1-diphosphate. The protein operates within pyrimidine metabolism; UMP biosynthesis via de novo pathway; UMP from orotate: step 1/2. Functionally, catalyzes the transfer of a ribosyl phosphate group from 5-phosphoribose 1-diphosphate to orotate, leading to the formation of orotidine monophosphate (OMP). The sequence is that of Orotate phosphoribosyltransferase from Xanthomonas campestris pv. campestris (strain 8004).